A 119-amino-acid chain; its full sequence is Protein TusC (119 aa).

This sequence belongs to the DsrF/TusC family. Heterohexamer, formed by a dimer of trimers. The hexameric TusBCD complex contains 2 copies each of TusB, TusC and TusD. The TusBCD complex interacts with TusE.

It is found in the cytoplasm. Its function is as follows. Part of a sulfur-relay system required for 2-thiolation of 5-methylaminomethyl-2-thiouridine (mnm(5)s(2)U) at tRNA wobble positions. This Serratia proteamaculans (strain 568) protein is Protein TusC.